A 349-amino-acid polypeptide reads, in one-letter code: 4-hydroxy-2-oxovalerate aldolase 2 (349 aa).

Residues 12–264 (VRMTDTSLRD…KTGIDFFDIA (253 aa)) enclose the Pyruvate carboxyltransferase domain. 20–21 (RD) serves as a coordination point for substrate. D21 contributes to the Mn(2+) binding site. Residue H24 is the Proton acceptor of the active site. The substrate site is built by S174 and H203. Residues H203 and H205 each contribute to the Mn(2+) site. Position 294 (Y294) interacts with substrate.

Belongs to the 4-hydroxy-2-oxovalerate aldolase family.

It carries out the reaction (S)-4-hydroxy-2-oxopentanoate = acetaldehyde + pyruvate. The protein is 4-hydroxy-2-oxovalerate aldolase 2 (bphI-2) of Mycolicibacterium smegmatis (strain ATCC 700084 / mc(2)155) (Mycobacterium smegmatis).